A 343-amino-acid polypeptide reads, in one-letter code: Heat-inducible transcription repressor HrcA (343 aa).

It belongs to the HrcA family.

In terms of biological role, negative regulator of class I heat shock genes (grpE-dnaK-dnaJ and groELS operons). Prevents heat-shock induction of these operons. The sequence is that of Heat-inducible transcription repressor HrcA from Mycobacterium marinum (strain ATCC BAA-535 / M).